The chain runs to 94 residues: Neutrophil defensin 1 (94 aa).

The signal sequence occupies residues 1-19; the sequence is MRTLAILAAILLVALQAQA. Positions 20–64 are excised as a propeptide; it reads EPLQARADEVAAAPEQIPADNPEVVVSLAWDESLAPKHPGSRKNV. 3 cysteine pairs are disulfide-bonded: cysteine 66–cysteine 94, cysteine 68–cysteine 83, and cysteine 73–cysteine 93. Position 78 is an ADP-ribosylarginine; by ART1 (arginine 78). Tyrosine 85 is modified (phosphotyrosine). Arginine 88 carries the post-translational modification ADP-ribosylarginine; by ART1.

It belongs to the alpha-defensin family. Tetramer. Dimer. Interacts with RETN. ADP-ribosylation drastically reduces cytotoxic and antibacterial activities, and enhances IL8 production.

The protein resides in the secreted. Functionally, effector molecule of the innate immune system that acts via antibiotic-like properties against a broad array of infectious agents including bacteria, fungi, and viruses or by promoting the activation and maturation of some APCs. Interacts with the essential precursor of cell wall synthesis lipid II to inhibit bacterial cell wall synthesis. Inhibits adenovirus infection via inhibition of viral disassembly at the vertex region, thereby restricting the release of internal capsid protein pVI, which is required for endosomal membrane penetration during cell entry. In addition, interaction with adenovirus capsid leads to the redirection of viral particles to TLR4 thereby promoting a NLRP3-mediated inflammasome response and interleukin 1-beta (IL-1beta) release. Induces the production of proinflammatory cytokines including type I interferon (IFN) in plasmacytoid dendritic cells (pDCs) by triggering the degradation of NFKBIA and nuclear translocation of IRF1, both of which are required for activation of pDCs. This Pan troglodytes (Chimpanzee) protein is Neutrophil defensin 1 (DEFA1).